Consider the following 400-residue polypeptide: MGGWSSKPRKGMGTNLSVPNPLGFFPDHQLDPAFGANSNNPDWDFNPIKDHWPQANQVGVGAFGPGFTPPHGGVLGWSPQAQGILATVPAMPPPASTNRQSGRQPTPISPPLRDSHPQAMQWNSTAFHQALQDPRVRGLYFPAGGSSSGTLNPVPTIASHISSISSRIGDPAPNMENITSGFLGPLLVLQAGFFLLTRILTIPQSLDSWWTSLNFLGGAPVCLGQNSQSPTSNHSPTSCPPICPGYRWMCLRRFIIFLFILLLCLIFLLVLLDYQGMLPVCPLIPGSTTTSTGPCKTCTTPAQGNSMFPSCCCTKPTDGNCTCIPIPSSWAFAKYLWEWASVRFSWLSLLVPFVQWFVGLSPTVWLSAIWMMWYWGPSLYNILSPFIPLLPIFFCLWVYI.

Met1 bears the N-acetylmethionine mark. 2 disordered regions span residues 1-24 (MGGWSSKPRKGMGTNLSVPNPLGF) and 89-116 (PAMPPPASTNRQSGRQPTPISPPLRDSH). Gly2 carries N-myristoyl glycine; by host lipidation. Positions 2-119 (GGWSSKPRKG…PPLRDSHPQA (118 aa)) are pre-S1. The pre-S stretch occupies residues 2–174 (GGWSSKPRKG…SSRIGDPAPN (173 aa)). Residues 2–181 (GGWSSKPRKG…APNMENITSG (180 aa)) are Virion surface; in external conformation-facing. Topologically, residues 2–253 (GGWSSKPRKG…PGYRWMCLRR (252 aa)) are intravirion; in internal conformation. N-linked (GlcNAc...) asparagine glycosylation is present at Trp4. Polar residues predominate over residues 96-106 (STNRQSGRQPT). The interval 120-174 (MQWNSTAFHQALQDPRVRGLYFPAGGSSSGTLNPVPTIASHISSISSRIGDPAPN) is pre-S2. A helical membrane pass occupies residues 182–202 (FLGPLLVLQAGFFLLTRILTI). Over 203-253 (PQSLDSWWTSLNFLGGAPVCLGQNSQSPTSNHSPTSCPPICPGYRWMCLRR) the chain is Intravirion; in external conformation. Residues 254–274 (FIIFLFILLLCLIFLLVLLDY) traverse the membrane as a helical segment. The Virion surface segment spans residues 275-348 (QGMLPVCPLI…WASVRFSWLS (74 aa)). A glycan (N-linked (GlcNAc...) asparagine; by host) is linked at Asn320. The helical transmembrane segment at 349-369 (LLVPFVQWFVGLSPTVWLSAI) threads the bilayer. The Intravirion segment spans residues 370–375 (WMMWYW). Residues 376–398 (GPSLYNILSPFIPLLPIFFCLWV) form a helical membrane-spanning segment. The Virion surface portion of the chain corresponds to 399–400 (YI).

This sequence belongs to the orthohepadnavirus major surface antigen family. In terms of assembly, in its internal form (Li-HBsAg), interacts with the capsid protein and with the isoform S. Interacts with host chaperone CANX. As to quaternary structure, associates with host chaperone CANX through its pre-S2 N glycan; this association may be essential for isoform M proper secretion. Interacts with isoform L. Interacts with the antigens of satellite virus HDV (HDVAgs); this interaction is required for encapsidation of HDV genomic RNA. In terms of processing, isoform M is N-terminally acetylated by host at a ratio of 90%, and N-glycosylated by host at the pre-S2 region. Post-translationally, myristoylated.

The protein localises to the virion membrane. Functionally, the large envelope protein exists in two topological conformations, one which is termed 'external' or Le-HBsAg and the other 'internal' or Li-HBsAg. In its external conformation the protein attaches the virus to cell receptors and thereby initiating infection. This interaction determines the species specificity and liver tropism. This attachment induces virion internalization predominantly through caveolin-mediated endocytosis. The large envelope protein also assures fusion between virion membrane and endosomal membrane. In its internal conformation the protein plays a role in virion morphogenesis and mediates the contact with the nucleocapsid like a matrix protein. The middle envelope protein plays an important role in the budding of the virion. It is involved in the induction of budding in a nucleocapsid independent way. In this process the majority of envelope proteins bud to form subviral lipoprotein particles of 22 nm of diameter that do not contain a nucleocapsid. In Hepatitis B virus genotype A1 subtype adw (isolate Philippines/pFDW294/1988) (HBV-A), this protein is Large envelope protein.